We begin with the raw amino-acid sequence, 3432 residues long: Genome polyprotein (3432 aa).

The interaction with host EXOC1 stretch occupies residues 2–15; that stretch reads TKKPGGPGKNRAIN. Topologically, residues 2–109 are cytoplasmic; sequence TKKPGGPGKN…RKQNKRGGNE (108 aa). Positions 37-72 are hydrophobic; homodimerization of capsid protein C; that stretch reads LLDGRGPVRFVLALITFFKFTALAPTKALLGRWKAV. A propeptide spans 106 to 127 (ER anchor for the capsid protein C, removed in mature form by serine protease NS3); it reads GGNEGSIMWLASLAVVIAYAGA. Residues 110-130 traverse the membrane as a helical segment; it reads GSIMWLASLAVVIAYAGAMKL. The Extracellular portion of the chain corresponds to 131-253; it reads SNFQGKLLMT…ATRYLMKTEN (123 aa). The N-linked (GlcNAc...) asparagine; by host glycan is linked to N142. Residues 254–274 form a helical membrane-spanning segment; sequence WIIRNPGYAFLAATLGWMLGS. Residues 275–279 lie on the Cytoplasmic side of the membrane; that stretch reads NNGQR. A helical transmembrane segment spans residues 280–294; the sequence is VVFTILLLLVAPAYS. Topologically, residues 295–746 are extracellular; that stretch reads FNCLGMGNRD…QVFGGAFRTL (452 aa). Disulfide bonds link C297–C324, C354–C410, C354–C415, C368–C399, C386–C410, and C386–C415. The interval 392 to 405 is fusion peptide; the sequence is DRGWGNGCGLFGKG. Residue N448 is glycosylated (N-linked (GlcNAc...) asparagine; by host). Cystine bridges form between C484–C581 and C598–C629. A helical transmembrane segment spans residues 747–767; the sequence is FGGMSWITQGLMGALLLWMGV. Residues 768-773 are Cytoplasmic-facing; it reads NARDRS. Residues 774-794 form a helical membrane-spanning segment; it reads IALAFLATGGVLVFLATNVHA. Residues 795–1219 lie on the Extracellular side of the membrane; sequence DTGCAIDITR…AFAEANSGGD (425 aa). Cystine bridges form between C798–C809, C849–C937, C973–C1017, C1074–C1123, C1085–C1106, and C1107–C1110. N-linked (GlcNAc...) asparagine; by host glycans are attached at residues N924 and N1001. The helical transmembrane segment at 1220–1240 threads the bilayer; sequence VLHLALIAVFKIQPAFLVMNM. Over 1241–1250 the chain is Cytoplasmic; the sequence is LSTRWTNQEN. Residues 1251 to 1271 traverse the membrane as a helical segment; sequence VVLVLGAALFQLASVDLQIGV. Position 1272 (H1272) is a topological domain, lumenal. The chain crosses the membrane as a helical span at residues 1273-1293; that stretch reads GILNAAAIAWMIVRAITFPTT. Residues 1294–1309 are Cytoplasmic-facing; the sequence is SSVTMPVLALLTPGMR. The helical transmembrane segment at 1310–1330 threads the bilayer; it reads ALYLDTYRIILLVIGICSLLQ. Topologically, residues 1331 to 1341 are lumenal; that stretch reads ERKKTMAKKKG. A helical membrane pass occupies residues 1342-1362; sequence AVLLGLALTSTGWFSPTTIAA. Topologically, residues 1363–1374 are cytoplasmic; the sequence is GLMVCNPNKKRG. The helical transmembrane segment at 1375 to 1395 threads the bilayer; the sequence is WPATEFLSAVGLMFAIVGGLA. Residues 1396-1398 lie on the Lumenal side of the membrane; sequence ELD. A helical membrane pass occupies residues 1399-1419; the sequence is IESMSIPFMLAGLMAVSYVVS. Topologically, residues 1420-1476 are cytoplasmic; that stretch reads GKATDMWLERAADISWEMDAAITGSSRRLDVKLDDDGDFHLIDDPGVPWKVWVLRMS. The tract at residues 1427 to 1466 is interacts with and activates NS3 protease; the sequence is LERAADISWEMDAAITGSSRRLDVKLDDDGDFHLIDDPGV. Positions 1477 to 1497 form an intramembrane region, helical; it reads CIGLAALTPWAIVPAAFGYWL. Over 1498–2173 the chain is Cytoplasmic; it reads TLKTTKRGGV…RMALEELPDA (676 aa). One can recognise a Peptidase S7 domain in the interval 1505–1682; it reads GGVFWDTPSP…DRQEEPVPEA (178 aa). Active-site charge relay system; for serine protease NS3 activity residues include H1555, D1579, and S1639. In terms of domain architecture, Helicase ATP-binding spans 1685 to 1841; it reads PNMLRKRQMT…DSNAPIHDLQ (157 aa). Residues 1689–1692 are important for RNA-binding; sequence RKRQ. Position 1698–1705 (1698–1705) interacts with ATP; it reads LHPGSGKT. The DEAH box motif lies at 1789–1792; that stretch reads DEAH. Residues 1852 to 2017 enclose the Helicase C-terminal domain; sequence GYEWITEYAG…GLVAQLYGPE (166 aa). The residue at position 1893 (K1893) is an N6-acetyllysine; by host. The tract at residues 1950 to 1971 is disordered; it reads NPSPITSASAAQRRGRVGRNPN. The segment at 2168 to 2172 is regulates the ATPase activity of NS3 helicase; sequence EELPD. A helical membrane pass occupies residues 2174-2194; the sequence is LETITLIVAITVMTGGFFLLM. Residues 2195–2199 lie on the Lumenal side of the membrane; the sequence is MQRKG. Positions 2200–2220 form an intramembrane region, helical; that stretch reads IGKMGLGALVLTLATFFLWAA. Residue E2221 is a topological domain, lumenal. A helical membrane pass occupies residues 2222-2242; it reads VPGTKIAGTLLIALLLMVVLI. At 2243–2257 the chain is on the cytoplasmic side; sequence PEPEKQRSQTDNQLA. The chain crosses the membrane as a helical span at residues 2258–2278; it reads VFLICVLTVVGVVAANEYGML. Residues 2279-2311 lie on the Lumenal side of the membrane; the sequence is EKTKADLKSMFVGKTQASGLTGLPSMALDLRPA. An intramembrane region (helical) is located at residues 2312–2332; it reads TAWALYGGSTVVLTPLLKHLI. The Lumenal segment spans residues 2333–2368; it reads TSEYVTTSLASINSQAGSLFVLPRGVPFTDLDLTVG. A helical membrane pass occupies residues 2369–2389; sequence LVFLGCWGQITLTTFLTAMVL. Residues 2390–2444 are Cytoplasmic-facing; it reads ATLHYGYMLPGWQAEALRAAQRRTAAGIMKNAVVDGMVATDVPELERTTPLMQKK. A helical membrane pass occupies residues 2445 to 2465; sequence VGQVLLIGVSVAAFLVNPNVT. Over 2466-2469 the chain is Lumenal; it reads TVRE. Residues 2470–2490 traverse the membrane as a helical segment; the sequence is AGVLVTAATLTLWDNGASAVW. Residues 2491-3432 are Cytoplasmic-facing; the sequence is NSTTATGLCH…DVLIQEDRVI (942 aa). The region spanning 2528-2793 is the mRNA cap 0-1 NS5-type MT domain; sequence GRPGGRTLGE…DVNLGSGTRA (266 aa). S2583 contributes to the S-adenosyl-L-methionine binding site. A Phosphoserine modification is found at S2583. K2588 (for 2'-O-MTase activity) is an active-site residue. G2613, W2614, T2631, K2632, D2658, and V2659 together coordinate S-adenosyl-L-methionine. D2673 functions as the For 2'-O-MTase activity in the catalytic mechanism. Residue I2674 coordinates S-adenosyl-L-methionine. Residues K2709 and E2745 each act as for 2'-O-MTase activity in the active site. Residue Y2747 coordinates S-adenosyl-L-methionine. Residues E2967, H2971, C2976, and C2979 each contribute to the Zn(2+) site. One can recognise a RdRp catalytic domain in the interval 3057–3209; the sequence is GKMYADDTAG…KPLDDRFATA (153 aa). Zn(2+) is bound by residues H3244, C3260, and C3379.

In the N-terminal section; belongs to the class I-like SAM-binding methyltransferase superfamily. mRNA cap 0-1 NS5-type methyltransferase family. As to quaternary structure, homodimer. Interacts (via N-terminus) with host EXOC1 (via C-terminus); this interaction results in EXOC1 degradation through the proteasome degradation pathway. In terms of assembly, forms heterodimers with envelope protein E in the endoplasmic reticulum and Golgi. Homodimer; in the endoplasmic reticulum and Golgi. Interacts with protein prM. Interacts with non-structural protein 1. Interacts with host HSPA5. As to quaternary structure, homodimer; Homohexamer when secreted. Interacts with envelope protein E. NS1 interacts with NS4B. Interacts with host complement protein CFH; this interaction leads to the degradation of C3. In terms of assembly, interacts (via N-terminus) with serine protease NS3. Forms a heterodimer with serine protease NS3. May form homooligomers. As to quaternary structure, forms a heterodimer with NS2B. Interacts with non-structural protein 2A (via N-terminus). Interacts with NS4B. Interacts with unphosphorylated RNA-directed RNA polymerase NS5; this interaction stimulates RNA-directed RNA polymerase NS5 guanylyltransferase activity. Interacts with host ILF2. In terms of assembly, interacts with serine protease NS3. Homodimer. Interacts with host STAT2; this interaction inhibits the phosphorylation of the latter, and, when all viral proteins are present (polyprotein), targets STAT2 for degradation. Interacts with serine protease NS3. Requires Mn(2+) as cofactor. It depends on Mg(2+) as a cofactor. Post-translationally, specific enzymatic cleavages in vivo yield mature proteins. Cleavages in the lumen of endoplasmic reticulum are performed by host signal peptidase, whereas cleavages in the cytoplasmic side are performed by serine protease NS3. Signal cleavage at the 2K-4B site requires a prior NS3 protease-mediated cleavage at the 4A-2K site. In terms of processing, cleaved in post-Golgi vesicles by a host furin, releasing the mature small envelope protein M, and peptide pr. This cleavage is incomplete as up to 30% of viral particles still carry uncleaved prM. N-glycosylated. Post-translationally, N-glycosylated. The excreted form is glycosylated and this is required for efficient secretion of the protein from infected cells. In terms of processing, acetylated by host KAT5. Acetylation modulates NS3 RNA-binding and unwinding activities and plays an important positive role for viral replication. Phosphorylated on serines residues. This phosphorylation may trigger NS5 nuclear localization.

It is found in the virion. It localises to the host nucleus. Its subcellular location is the host cytoplasm. The protein localises to the host perinuclear region. The protein resides in the secreted. It is found in the virion membrane. It localises to the host endoplasmic reticulum membrane. Its subcellular location is the host cell surface. It catalyses the reaction Selective hydrolysis of -Xaa-Xaa-|-Yaa- bonds in which each of the Xaa can be either Arg or Lys and Yaa can be either Ser or Ala.. The catalysed reaction is RNA(n) + a ribonucleoside 5'-triphosphate = RNA(n+1) + diphosphate. It carries out the reaction a ribonucleoside 5'-triphosphate + H2O = a ribonucleoside 5'-diphosphate + phosphate + H(+). The enzyme catalyses ATP + H2O = ADP + phosphate + H(+). It catalyses the reaction a 5'-end (5'-triphosphoguanosine)-ribonucleoside in mRNA + S-adenosyl-L-methionine = a 5'-end (N(7)-methyl 5'-triphosphoguanosine)-ribonucleoside in mRNA + S-adenosyl-L-homocysteine. The catalysed reaction is a 5'-end (N(7)-methyl 5'-triphosphoguanosine)-ribonucleoside in mRNA + S-adenosyl-L-methionine = a 5'-end (N(7)-methyl 5'-triphosphoguanosine)-(2'-O-methyl-ribonucleoside) in mRNA + S-adenosyl-L-homocysteine + H(+). Its function is as follows. Plays a role in virus budding by binding to the cell membrane and gathering the viral RNA into a nucleocapsid that forms the core of a mature virus particle. During virus entry, may induce genome penetration into the host cytoplasm after hemifusion induced by the surface proteins. Can migrate to the cell nucleus where it modulates host functions. Overcomes the anti-viral effects of host EXOC1 by sequestering and degrading the latter through the proteasome degradation pathway. In terms of biological role, inhibits RNA silencing by interfering with host Dicer. Prevents premature fusion activity of envelope proteins in trans-Golgi by binding to envelope protein E at pH 6.0. After virion release in extracellular space, gets dissociated from E dimers. Functionally, acts as a chaperone for envelope protein E during intracellular virion assembly by masking and inactivating envelope protein E fusion peptide. prM is the only viral peptide matured by host furin in the trans-Golgi network probably to avoid catastrophic activation of the viral fusion activity in acidic Golgi compartment prior to virion release. prM-E cleavage is inefficient, and many virions are only partially matured. These uncleaved prM would play a role in immune evasion. Its function is as follows. May play a role in virus budding. Exerts cytotoxic effects by activating a mitochondrial apoptotic pathway through M ectodomain. May display a viroporin activity. In terms of biological role, binds to host cell surface receptor and mediates fusion between viral and cellular membranes. Efficient virus attachment to cell is, at least in part, mediated by host HSPA5. Envelope protein is synthesized in the endoplasmic reticulum in the form of heterodimer with protein prM. They play a role in virion budding in the ER, and the newly formed immature particle is covered with 60 spikes composed of heterodimer between precursor prM and envelope protein E. The virion is transported to the Golgi apparatus where the low pH causes dissociation of PrM-E heterodimers and formation of E homodimers. prM-E cleavage is inefficient, and many virions are only partially matured. These uncleaved prM would play a role in immune evasion. Involved in immune evasion, pathogenesis and viral replication. Once cleaved off the polyprotein, is targeted to three destinations: the viral replication cycle, the plasma membrane and the extracellular compartment. Essential for viral replication. Required for formation of the replication complex and recruitment of other non-structural proteins to the ER-derived membrane structures. Excreted as a hexameric lipoparticle that plays a role against host immune response. Antagonizing the complement function. Binds to the host macrophages and dendritic cells. Inhibits signal transduction originating from Toll-like receptor 3 (TLR3). Functionally, component of the viral RNA replication complex that functions in virion assembly and antagonizes the host alpha/beta interferon antiviral response. Its function is as follows. Required cofactor for the serine protease function of NS3. May have membrane-destabilizing activity and form viroporins. In terms of biological role, displays three enzymatic activities: serine protease, NTPase and RNA helicase. NS3 serine protease, in association with NS2B, performs its autocleavage and cleaves the polyprotein at dibasic sites in the cytoplasm: C-prM, NS2A-NS2B, NS2B-NS3, NS3-NS4A, NS4A-2K and NS4B-NS5. NS3 RNA helicase binds RNA and unwinds dsRNA in the 3' to 5' direction. Regulates the ATPase activity of the NS3 helicase activity. NS4A allows NS3 helicase to conserve energy during unwinding. Functionally, functions as a signal peptide for NS4B and is required for the interferon antagonism activity of the latter. Its function is as follows. Induces the formation of ER-derived membrane vesicles where the viral replication takes place. Inhibits interferon (IFN)-induced host STAT1 phosphorylation and nuclear translocation, thereby preventing the establishment of cellular antiviral state by blocking the IFN-alpha/beta pathway. Inhibits STAT2 translocation in the nucleus after IFN-alpha treatment. In terms of biological role, replicates the viral (+) and (-) RNA genome, and performs the capping of genomes in the cytoplasm. NS5 methylates viral RNA cap at guanine N-7 and ribose 2'-O positions. Besides its role in RNA genome replication, also prevents the establishment of cellular antiviral state by blocking the interferon-alpha/beta (IFN-alpha/beta) signaling pathway. Inhibits host TYK2 and STAT2 phosphorylation, thereby preventing activation of JAK-STAT signaling pathway. The protein is Genome polyprotein of Ardeidae (herons).